The chain runs to 230 residues: Sugar fermentation stimulation protein homolog (230 aa).

This sequence belongs to the SfsA family.

This chain is Sugar fermentation stimulation protein homolog, found in Thermoanaerobacter pseudethanolicus (strain ATCC 33223 / 39E) (Clostridium thermohydrosulfuricum).